A 972-amino-acid chain; its full sequence is Isoleucine--tRNA ligase (972 aa).

Residues 63 to 73 (PYANGNIHIGH) carry the 'HIGH' region motif. E603 contacts L-isoleucyl-5'-AMP. Residues 644 to 648 (KMSKS) carry the 'KMSKS' region motif. K647 serves as a coordination point for ATP.

Belongs to the class-I aminoacyl-tRNA synthetase family. IleS type 1 subfamily. Monomer.

It localises to the cytoplasm. It catalyses the reaction tRNA(Ile) + L-isoleucine + ATP = L-isoleucyl-tRNA(Ile) + AMP + diphosphate. In terms of biological role, catalyzes the attachment of isoleucine to tRNA(Ile). As IleRS can inadvertently accommodate and process structurally similar amino acids such as valine, to avoid such errors it has two additional distinct tRNA(Ile)-dependent editing activities. One activity is designated as 'pretransfer' editing and involves the hydrolysis of activated Val-AMP. The other activity is designated 'posttransfer' editing and involves deacylation of mischarged Val-tRNA(Ile). The chain is Isoleucine--tRNA ligase from Brucella melitensis biotype 1 (strain ATCC 23456 / CCUG 17765 / NCTC 10094 / 16M).